A 639-amino-acid polypeptide reads, in one-letter code: Pheromone-processing carboxypeptidase kex1 (639 aa).

The signal sequence occupies residues 1-30 (MAFSHAPSGWRTALLAGLIATVAWLPAIVA). Topologically, residues 31 to 517 (QEKTQADYFI…KAAEWKAYTR (487 aa)) are lumenal. N-linked (GlcNAc...) asparagine glycosylation is present at Asn119. Catalysis depends on residues Ser183 and Asp384. 2 N-linked (GlcNAc...) asparagine glycosylation sites follow: Asn435 and Asn443. Residue His446 is part of the active site. The segment at 477 to 504 (DSLIDGEKGPLTSVGDHPNSTKAEEDKS) is disordered. An N-linked (GlcNAc...) asparagine glycan is attached at Asn495. The helical transmembrane segment at 518-538 (SGEVALVIAVIVACICGFLLC) threads the bilayer. Topologically, residues 539 to 639 (RSRRAKSAYK…DRGRRKEESR (101 aa)) are cytoplasmic. The tract at residues 580–639 (ADFDERELDEVPKKSGKGYGQISSEKGRVPHNDSSFSLGVDSDDDEAGSSDRGRRKEESR) is disordered. Basic and acidic residues predominate over residues 628 to 639 (SSDRGRRKEESR).

It belongs to the peptidase S10 family.

It is found in the golgi apparatus. It localises to the trans-Golgi network membrane. The enzyme catalyses Preferential release of a C-terminal arginine or lysine residue.. Protease with a carboxypeptidase B-like function involved in the C-terminal processing of the lysine and arginine residues from protein precursors. Promotes cell fusion and is involved in the programmed cell death. The polypeptide is Pheromone-processing carboxypeptidase kex1 (kex1) (Pyrenophora tritici-repentis (strain Pt-1C-BFP) (Wheat tan spot fungus)).